The primary structure comprises 155 residues: Ribonuclease H (155 aa).

An RNase H type-1 domain is found at 4-145; the sequence is NISKVVIYTD…ADKLAAQGRQ (142 aa). Residues aspartate 13, glutamate 51, aspartate 73, and aspartate 137 each contribute to the Mg(2+) site.

It belongs to the RNase H family. As to quaternary structure, monomer. It depends on Mg(2+) as a cofactor.

The protein localises to the cytoplasm. It catalyses the reaction Endonucleolytic cleavage to 5'-phosphomonoester.. Endonuclease that specifically degrades the RNA of RNA-DNA hybrids. This Rickettsia canadensis (strain McKiel) protein is Ribonuclease H.